The primary structure comprises 358 residues: Peptide chain release factor 1 (358 aa).

Q233 carries the N5-methylglutamine modification.

It belongs to the prokaryotic/mitochondrial release factor family. Post-translationally, methylated by PrmC. Methylation increases the termination efficiency of RF1.

It localises to the cytoplasm. Peptide chain release factor 1 directs the termination of translation in response to the peptide chain termination codons UAG and UAA. The polypeptide is Peptide chain release factor 1 (Listeria innocua serovar 6a (strain ATCC BAA-680 / CLIP 11262)).